A 956-amino-acid polypeptide reads, in one-letter code: ATPase 11, plasma membrane-type (956 aa).

At 1 to 65 the chain is on the cytoplasmic side; the sequence is MGDKEEVLEA…EKKESKFLKF (65 aa). A helical membrane pass occupies residues 66–85; that stretch reads LGFMWNPLSWVMEAAAIMAI. The Extracellular portion of the chain corresponds to 86–97; sequence ALANGGGKPPDW. A helical membrane pass occupies residues 98-118; that stretch reads QDFVGIITLLVINSTISFIEE. The Cytoplasmic segment spans residues 119 to 247; sequence NNAGNAAAAL…GHFQQVLTAI (129 aa). A helical transmembrane segment spans residues 248-268; sequence GNFCICSIAVGMIIEIVVMYP. Topologically, residues 269 to 277 are extracellular; sequence IQHRAYRPG. Residues 278–295 form a helical membrane-spanning segment; the sequence is IDNLLVLLIGGIPIAMPT. Residues 296–647 are Cytoplasmic-facing; the sequence is VLSVTMAIGS…TSRAIFQRMK (352 aa). The active-site 4-aspartylphosphate intermediate is D333. Residues D592 and D596 each contribute to the Mg(2+) site. Residues 648–669 traverse the membrane as a helical segment; it reads NYTIYAVSITIRIVLGFMLLAL. Over 670–674 the chain is Extracellular; it reads IWKFD. The chain crosses the membrane as a helical span at residues 675–697; it reads FPPFMVLIIAILNDGTIMTISKD. Residues 698–713 lie on the Cytoplasmic side of the membrane; that stretch reads RVKPSPLPDSWKLSEI. The helical transmembrane segment at 714-734 threads the bilayer; it reads FATGVVFGSYMAMMTVIFFWA. At 735-759 the chain is on the extracellular side; that stretch reads AYKTDFFPRTFGVSTLEKTAHDDFR. A helical transmembrane segment spans residues 760 to 780; that stretch reads KLASAIYLQVSIISQALIFVT. Topologically, residues 781 to 792 are cytoplasmic; it reads RSRSWSYVERPG. A helical membrane pass occupies residues 793-813; that stretch reads MLLVVAFILAQLVATLIAVYA. Topologically, residues 814 to 821 are extracellular; the sequence is NWSFAAIE. The helical transmembrane segment at 822-842 threads the bilayer; it reads GIGWGWAGVIWLYNIVFYIPL. Over 843 to 956 the chain is Cytoplasmic; that stretch reads DIIKFLIRYA…IETIQQAYTV (114 aa). T889 carries the phosphothreonine modification. S938 is subject to Phosphoserine. The segment at 954–956 is interaction with 14-3-3 proteins; that stretch reads YTV. T955 bears the Phosphothreonine mark.

The protein belongs to the cation transport ATPase (P-type) (TC 3.A.3) family. Type IIIA subfamily. Binds to 14-3-3 proteins. The binding is induced by phosphorylation of Thr-955. Binding to 14-3-3 proteins activates the H(+)-ATPase. As to expression, expressed in guard cells, mesophyll cells, leaves and roots.

It is found in the membrane. The enzyme catalyses ATP + H2O + H(+)(in) = ADP + phosphate + 2 H(+)(out). The plasma membrane H(+) ATPase of plants and fungi generates a proton gradient that drives the active transport of nutrients by H(+)-symport. The resulting external acidification and/or internal alkinization may mediate growth responses. The chain is ATPase 11, plasma membrane-type (AHA11) from Arabidopsis thaliana (Mouse-ear cress).